The primary structure comprises 63 residues: MARVCDVCQKGKVSGNQVSHSNRHNRRTWTPNLRKVRAIVKGTPKRLKVCTRCLRSGKVERAL.

It belongs to the bacterial ribosomal protein bL28 family.

This is Large ribosomal subunit protein bL28 from Alkaliphilus metalliredigens (strain QYMF).